The following is a 432-amino-acid chain: D-amino acid dehydrogenase (432 aa).

3-17 (VVVLGSGVVGVASAW) lines the FAD pocket.

It belongs to the DadA oxidoreductase family. The cofactor is FAD.

It carries out the reaction a D-alpha-amino acid + A + H2O = a 2-oxocarboxylate + AH2 + NH4(+). It participates in amino-acid degradation; D-alanine degradation; NH(3) and pyruvate from D-alanine: step 1/1. Functionally, oxidative deamination of D-amino acids. This chain is D-amino acid dehydrogenase, found in Cronobacter sakazakii (strain ATCC BAA-894) (Enterobacter sakazakii).